Consider the following 293-residue polypeptide: Ribosomal protein L11 methyltransferase (293 aa).

S-adenosyl-L-methionine-binding residues include Thr145, Gly166, Asp188, and Asn230.

Belongs to the methyltransferase superfamily. PrmA family.

The protein localises to the cytoplasm. It carries out the reaction L-lysyl-[protein] + 3 S-adenosyl-L-methionine = N(6),N(6),N(6)-trimethyl-L-lysyl-[protein] + 3 S-adenosyl-L-homocysteine + 3 H(+). Methylates ribosomal protein L11. This is Ribosomal protein L11 methyltransferase from Shewanella piezotolerans (strain WP3 / JCM 13877).